The sequence spans 178 residues: MSTLIASRRYASALLSAAEEGNFLNQIVDELHVIKEVLEHSRDLVYALRSPLVKGDRKIHILEEIFKDSVGEKMFLFLRLVAHKKRAGLLPEIIDEFQILLDEKRGVINVDITSATALSDEQTAELVTKLAAFTGKEIRPRMAINEQFIGGVAVKIGDTIYDGSISHQLQMLRKSLVS.

Belongs to the ATPase delta chain family. F-type ATPases have 2 components, F(1) - the catalytic core - and F(0) - the membrane proton channel. F(1) has five subunits: alpha(3), beta(3), gamma(1), delta(1), epsilon(1). F(0) has three main subunits: a(1), b(2) and c(10-14). The alpha and beta chains form an alternating ring which encloses part of the gamma chain. F(1) is attached to F(0) by a central stalk formed by the gamma and epsilon chains, while a peripheral stalk is formed by the delta and b chains.

The protein resides in the cell inner membrane. Functionally, f(1)F(0) ATP synthase produces ATP from ADP in the presence of a proton or sodium gradient. F-type ATPases consist of two structural domains, F(1) containing the extramembraneous catalytic core and F(0) containing the membrane proton channel, linked together by a central stalk and a peripheral stalk. During catalysis, ATP synthesis in the catalytic domain of F(1) is coupled via a rotary mechanism of the central stalk subunits to proton translocation. In terms of biological role, this protein is part of the stalk that links CF(0) to CF(1). It either transmits conformational changes from CF(0) to CF(1) or is implicated in proton conduction. In Pelodictyon phaeoclathratiforme (strain DSM 5477 / BU-1), this protein is ATP synthase subunit delta.